Here is a 168-residue protein sequence, read N- to C-terminus: Large ribosomal subunit protein uL10 (168 aa).

Belongs to the universal ribosomal protein uL10 family. In terms of assembly, part of the ribosomal stalk of the 50S ribosomal subunit. The N-terminus interacts with L11 and the large rRNA to form the base of the stalk. The C-terminus forms an elongated spine to which L12 dimers bind in a sequential fashion forming a multimeric L10(L12)X complex.

Functionally, forms part of the ribosomal stalk, playing a central role in the interaction of the ribosome with GTP-bound translation factors. The polypeptide is Large ribosomal subunit protein uL10 (Pediococcus pentosaceus (strain ATCC 25745 / CCUG 21536 / LMG 10740 / 183-1w)).